A 91-amino-acid chain; its full sequence is Movement protein TGBp3 (91 aa).

Topologically, residues 1 to 23 are lumenal; sequence MLGTRNIPTTSGLPLPPPSSSLS. A helical membrane pass occupies residues 24-46; it reads AYIFPTILAIIFAVFALVAIHIT. Over 47 to 91 the chain is Cytoplasmic; it reads TPEPFCTIHIDGASITITNCPDPAAILNKVAIGPWRGLSYHNNLK.

It belongs to the Tymovirales TGBp3 protein family.

Its subcellular location is the host endoplasmic reticulum membrane. Its function is as follows. Plays a role in viral cell-to-cell propagation, by facilitating genome transport to neighboring plant cells through plasmosdesmata. May induce the formation of granular vesicles derived from the Endoplasmic reticulum, which align on actin filaments. This chain is Movement protein TGBp3, found in Cymbidium mosaic virus (strain Singapore).